A 503-amino-acid chain; its full sequence is Probable cytosol aminopeptidase (503 aa).

Mn(2+) is bound by residues lysine 270 and aspartate 275. Lysine 282 is a catalytic residue. Mn(2+) is bound by residues aspartate 293, aspartate 352, and glutamate 354. The active site involves arginine 356.

This sequence belongs to the peptidase M17 family. Requires Mn(2+) as cofactor.

The protein resides in the cytoplasm. The enzyme catalyses Release of an N-terminal amino acid, Xaa-|-Yaa-, in which Xaa is preferably Leu, but may be other amino acids including Pro although not Arg or Lys, and Yaa may be Pro. Amino acid amides and methyl esters are also readily hydrolyzed, but rates on arylamides are exceedingly low.. It catalyses the reaction Release of an N-terminal amino acid, preferentially leucine, but not glutamic or aspartic acids.. In terms of biological role, presumably involved in the processing and regular turnover of intracellular proteins. Catalyzes the removal of unsubstituted N-terminal amino acids from various peptides. The chain is Probable cytosol aminopeptidase from Erwinia tasmaniensis (strain DSM 17950 / CFBP 7177 / CIP 109463 / NCPPB 4357 / Et1/99).